Reading from the N-terminus, the 335-residue chain is Methionine import ATP-binding protein MetN 2 (335 aa).

Residues 2-242 (IEFQNVHKTY…PEHPTTKRFV (241 aa)) form the ABC transporter domain. 38–45 (GHSGAGKS) provides a ligand contact to ATP.

It belongs to the ABC transporter superfamily. Methionine importer (TC 3.A.1.24) family. The complex is composed of two ATP-binding proteins (MetN), two transmembrane proteins (MetI) and a solute-binding protein (MetQ).

Its subcellular location is the cell inner membrane. The catalysed reaction is L-methionine(out) + ATP + H2O = L-methionine(in) + ADP + phosphate + H(+). It carries out the reaction D-methionine(out) + ATP + H2O = D-methionine(in) + ADP + phosphate + H(+). Functionally, part of the ABC transporter complex MetNIQ involved in methionine import. Responsible for energy coupling to the transport system. In Pseudomonas entomophila (strain L48), this protein is Methionine import ATP-binding protein MetN 2.